Here is a 116-residue protein sequence, read N- to C-terminus: UPF0102 protein PERMA_0362 (116 aa).

This sequence belongs to the UPF0102 family.

This chain is UPF0102 protein PERMA_0362, found in Persephonella marina (strain DSM 14350 / EX-H1).